A 715-amino-acid chain; its full sequence is Palmitoyltransferase ZDHHC5 (715 aa).

Topologically, residues 1-13 are cytoplasmic; that stretch reads MPAESGKRFKPSK. The helical transmembrane segment at 14 to 34 threads the bilayer; that stretch reads YVPVSAAAIFLVGATTLFFAF. At 35 to 38 the chain is on the extracellular side; it reads TCPG. The chain crosses the membrane as a helical span at residues 39-59; sequence LSLCVSPAVPIYNAIVFLFVL. At 60 to 148 the chain is on the cytoplasmic side; that stretch reads ANFSMATFMD…NCIGRRNYRY (89 aa). Y91 bears the Phosphotyrosine mark. The region spanning 104 to 154 is the DHHC domain; that stretch reads KWCATCRFYRPPRCSHCSVCDNCVEEFDHHCPWVNNCIGRRNYRYFFLFLL. The S-palmitoyl cysteine intermediate role is filled by C134. Residues 149–169 form a helical membrane-spanning segment; sequence FFLFLLSLTAHIMGVFGFGLL. The Extracellular portion of the chain corresponds to 170–191; the sequence is YVLYHMEELSGVRTAVTMAVMC. Residues 192–212 traverse the membrane as a helical segment; it reads VAGLFFIPVAGLTGFHVVLVA. The Cytoplasmic portion of the chain corresponds to 213–715; sequence RGRTTNEQVT…VGGTTYEISV (503 aa). Phosphoserine is present on residues S247, S296, and S299. The interval 289–648 is disordered; it reads GELRRSKSKG…SQKAPAGVSE (360 aa). Phosphothreonine is present on T303. A Phosphoserine modification is found at S345. Residues T348 and T350 each carry the phosphothreonine modification. The span at 359–373 shows a compositional bias: low complexity; it reads SSSSTSAAMPHSSSA. S380, S398, S406, and S409 each carry phosphoserine. T411 is subject to Phosphothreonine. 4 positions are modified to phosphoserine: S415, S425, S429, and S432. Low complexity predominate over residues 422–432; it reads SSGSRSSSLKS. T436 is modified (phosphothreonine). The span at 442–478 shows a compositional bias: polar residues; that stretch reads QLQSIRSEGTTSTSYKSLANQTRNGSLSYDSLLTPSD. Residues S529 and S554 each carry the phosphoserine modification. R617 carries the post-translational modification Omega-N-methylarginine. S621 is subject to Phosphoserine. A Phosphothreonine modification is found at T659. Positions 666–715 are disordered; sequence LKTAYSKSNGQPKSIGSASPGPGQQPLSSPTRGGVKKVSGVGGTTYEISV. The span at 668–679 shows a compositional bias: polar residues; that stretch reads TAYSKSNGQPKS. A compositionally biased stretch (low complexity) spans 681–695; it reads GSASPGPGQQPLSSP. 2 positions are modified to phosphoserine: S684 and S694. R697 bears the Omega-N-methylarginine mark.

Belongs to the DHHC palmitoyltransferase family. ERF2/ZDHHC9 subfamily. Phosphorylation regulates association with endocytic proteins and its subcellular localization. Phosphorylation by LYN during fatty acid uptake leads to inactivation of the activity. Post-translationally, autopalmitoylated. Palmitoylation of the C-terminal tail regulates stimulation-dependent plasma membrane motility.

The protein resides in the cell membrane. It catalyses the reaction L-cysteinyl-[protein] + hexadecanoyl-CoA = S-hexadecanoyl-L-cysteinyl-[protein] + CoA. Its function is as follows. Palmitoyltransferase that catalyzes the addition of palmitate onto various protein substrates such as CTNND2, CD36, GSDMD, NLRP3, NOD1, NOD2, STAT3 and S1PR1 thus plays a role in various biological processes including cell adhesion, inflammation, fatty acid uptake, bacterial sensing or cardiac functions. Plays an important role in the regulation of synapse efficacy by mediating palmitoylation of delta-catenin/CTNND2, thereby increasing synaptic delivery and surface stabilization of alpha-amino-3-hydroxy-5-methyl-4-isoxazole propionic acid receptors (AMPARs). Under basal conditions, remains at the synaptic membrane through FYN-mediated phosphorylation that prevents association with endocytic proteins. Neuronal activity enhances the internalization and trafficking of DHHC5 from spines to dendritic shafts where it palmitoylates delta-catenin/CTNND2. Regulates cell adhesion at the plasma membrane by palmitoylating GOLGA7B and DSG2. Plays a role in innate immune response by mediating the palmitoylation of NOD1 and NOD2 and their proper recruitment to the bacterial entry site and phagosomes. Also participates in fatty acid uptake by palmitoylating CD36 and thereby targeting it to the plasma membrane. Upon binding of fatty acids to CD36, gets phosphorylated by LYN leading to inactivation and subsequent CD36 caveolar endocytosis. Controls oligodendrocyte development by catalyzing STAT3 palmitoylation. Acts as a regulator of inflammatory response by mediating palmitoylation of NLRP3 and GSDMD. Palmitoylates NLRP3 to promote inflammasome assembly and activation. Activates pyroptosis by catalyzing palmitoylation of gasdermin-D (GSDMD), thereby promoting membrane translocation and pore formation of GSDMD. This is Palmitoyltransferase ZDHHC5 (ZDHHC5) from Canis lupus familiaris (Dog).